Here is a 65-residue protein sequence, read N- to C-terminus: uncharacterized protein (65 aa).

Positions 24 to 65 (NNNNNNNNNNNNNNNNNNNNNNNNNNNNNNNKNNKNNNKNND) are disordered.

This is an uncharacterized protein from Dictyostelium discoideum (Social amoeba).